Consider the following 1071-residue polypeptide: SLIT-ROBO Rho GTPase-activating protein 2 (1071 aa).

The F-BAR domain maps to 22–325 (KEIRAQLTEQ…AVENLDATSD (304 aa)). Residues 181 to 203 (LKEAEKQEEKQIGKSVKQEDRQT) show a composition bias toward basic and acidic residues. The segment at 181–211 (LKEAEKQEEKQIGKSVKQEDRQTPRSPDSTA) is disordered. A Phosphoserine modification is found at S206. A coiled-coil region spans residues 363–401 (QSELVQRRQQLQSRLSTLKIENEEVKKTMEATLQTIQDI). S427, S500, S691, S695, and S724 each carry phosphoserine. Positions 489-679 (ARRSSTVRKQ…TIIIQHENIF (191 aa)) constitute a Rho-GAP domain. Positions 703-726 (THGETISAEDSTQDVTAEHHTSDD) are disordered. The 60-residue stretch at 728–787 (CEPIEAIAKFDYVGRTARELSFKKGASLLLYQRASDDWWEGRHNGIDGLIPHQYIVVQDT) folds into the SH3 domain. 2 disordered regions span residues 794-820 (RSSP…GASC) and 835-936 (NKQR…NHRP). Phosphoserine is present on S795. Composition is skewed to polar residues over residues 857–867 (LGSSLTDSSSP), 874–885 (RPSSQPIMSQNL), and 897–907 (GHGSLNSISRH). S916 carries the post-translational modification Phosphoserine. Positions 919 to 933 (IRKTATAGRSKSFNN) are enriched in polar residues. The residue at position 927 (R927) is a Symmetric dimethylarginine; by PRMT5. A Phosphoserine modification is found at S930. The stretch at 940-968 (EVIAQDIEATMNSALNELQELERQSSAKH) forms a coiled coil. Residues 983–1012 (SPVVAPTSEPSSPLHTQLLKDPEPAFQRSA) are disordered. Residues S990, S994, S1013, and S1027 each carry the phosphoserine modification. Positions 1029 to 1071 (KMAAPVKPPATRPKPTVFPKTNATSPGVNSSASPQSTDKSCTV) are disordered. Positions 1047–1071 (PKTNATSPGVNSSASPQSTDKSCTV) are enriched in polar residues.

As to quaternary structure, homodimer. Forms a heterooligomer with SRGAP1 and SRGAP3 through its F-BAR domain. Interacts (via SH3 domain) with GPHN. Interacts (via SH3 domain) with FMNL1 (activated by RAC1); regulates the actin filament severing activity of FMNL1 and actin dynamics. Interacts (via SH3 domain) with FMNL3. Interacts with RAC1; specifically stimulates RAC1 GTPase activity. Interacts (via F-BAR domain) with HOMER1. Interacts with ROBO1 and ROBO2. Interacts with FASLG. Interacts with PRMT5. Post-translationally, methylation at Arg-927 is required for the stimulation of cell migration, dimerization and localization at the plasma membrane protrusions.

The protein resides in the cell membrane. It localises to the cell projection. It is found in the dendritic spine. Its subcellular location is the postsynaptic density. The protein localises to the postsynaptic cell membrane. The protein resides in the lamellipodium. It localises to the cytoplasmic vesicle. It is found in the phagosome. Its subcellular location is the nucleus. The protein localises to the cytoplasm. The protein resides in the cytosol. Functionally, postsynaptic RAC1 GTPase activating protein (GAP) that plays a key role in neuronal morphogenesis and migration mainly during development of the cerebral cortex. Regulates excitatory and inhibitory synapse maturation and density in cortical pyramidal neurons. SRGAP2/SRGAP2A limits excitatory and inhibitory synapse density through its RAC1-specific GTPase activating activity, while it promotes maturation of both excitatory and inhibitory synapses through its ability to bind to the postsynaptic scaffolding protein HOMER1 at excitatory synapses, and the postsynaptic protein GPHN at inhibitory synapses. Mechanistically, acts by binding and deforming membranes, thereby regulating actin dynamics to regulate cell migration and differentiation. Promotes cell repulsion and contact inhibition of locomotion: localizes to protrusions with curved edges and controls the duration of RAC1 activity in contact protrusions. In non-neuronal cells, may also play a role in cell migration by regulating the formation of lamellipodia and filopodia. The polypeptide is SLIT-ROBO Rho GTPase-activating protein 2 (Rattus norvegicus (Rat)).